Here is a 161-residue protein sequence, read N- to C-terminus: Small ribosomal subunit protein uS9 (161 aa).

2 disordered regions span residues 1 to 27 and 142 to 161; these read MAQI…APKA and KERK…FSKR.

Belongs to the universal ribosomal protein uS9 family.

This chain is Small ribosomal subunit protein uS9, found in Clavibacter michiganensis subsp. michiganensis (strain NCPPB 382).